The following is a 316-amino-acid chain: 1-aminocyclopropane-1-carboxylate oxidase 2 (316 aa).

Residues 153–253 (PNFGTKVSNY…RMSLASFYNP (101 aa)) enclose the Fe2OG dioxygenase domain. Positions 177, 179, and 234 each coordinate Fe cation.

The protein belongs to the iron/ascorbate-dependent oxidoreductase family. The cofactor is Fe cation. As to expression, leaves.

It catalyses the reaction 1-aminocyclopropane-1-carboxylate + L-ascorbate + O2 = ethene + L-dehydroascorbate + hydrogen cyanide + CO2 + 2 H2O. Its pathway is alkene biosynthesis; ethylene biosynthesis via S-adenosyl-L-methionine; ethylene from S-adenosyl-L-methionine: step 2/2. The polypeptide is 1-aminocyclopropane-1-carboxylate oxidase 2 (ACO2) (Solanum lycopersicum (Tomato)).